We begin with the raw amino-acid sequence, 309 residues long: GTP cyclohydrolase MptA (309 aa).

The protein belongs to the GTP cyclohydrolase IV family. As to quaternary structure, homodimer. It depends on Fe(2+) as a cofactor.

The catalysed reaction is GTP + H2O = 7,8-dihydroneopterin 2',3'-cyclic phosphate + formate + diphosphate + H(+). The protein operates within cofactor biosynthesis; 5,6,7,8-tetrahydromethanopterin biosynthesis. Functionally, converts GTP to 7,8-dihydro-D-neopterin 2',3'-cyclic phosphate, the first intermediate in the biosynthesis of coenzyme methanopterin. In Haloquadratum walsbyi (strain DSM 16790 / HBSQ001), this protein is GTP cyclohydrolase MptA.